The sequence spans 193 residues: Hypoxanthine/guanine phosphoribosyltransferase (193 aa).

This sequence belongs to the purine/pyrimidine phosphoribosyltransferase family. Archaeal HPRT subfamily. As to quaternary structure, homodimer.

The protein resides in the cytoplasm. It carries out the reaction IMP + diphosphate = hypoxanthine + 5-phospho-alpha-D-ribose 1-diphosphate. The enzyme catalyses GMP + diphosphate = guanine + 5-phospho-alpha-D-ribose 1-diphosphate. The protein operates within purine metabolism; IMP biosynthesis via salvage pathway; IMP from hypoxanthine: step 1/1. Catalyzes a salvage reaction resulting in the formation of IMP that is energically less costly than de novo synthesis. Prefers hypoxanthine, has 66% activity with guanine while activity with adenine, xanthine, uracil, orotate, or cytosine is negligible. In Methanothermobacter marburgensis (strain ATCC BAA-927 / DSM 2133 / JCM 14651 / NBRC 100331 / OCM 82 / Marburg) (Methanobacterium thermoautotrophicum), this protein is Hypoxanthine/guanine phosphoribosyltransferase.